The primary structure comprises 444 residues: MDPLNLSWYDDDPESRNWSRPFNGSEGKADRPPYNYYAMLLTLLIFVIVFGNVLVCMAVSREKALQTTTNYLIVSLAVADLLVATLVMPWVVYLEVVGEWKFSRIHCDIFVTLDVMMCTASILNLCAISIDRYTAVAMPMLYNTRYSSKRRVTVMIAIVWVLSFTISCPMLFGLNNTDQNECIIANPAFVVYSSIVSFYVPFIVTLLVYIKIYIVLRRRRKRVNTKRSSRAFRANLKAPLKGNCTHPEDMKLCTVIMKSNGSFPVNRRRVEAARRAQELEMEMLSSTSPPERTRYSPIPPSHHQLTLPDPSHHGLHSTPDSPAKPEKNGHAKTVNPKIAKIFEIQSMPNGKTRTSLKTMSRRKLSQQKEKKATQMLAIVLGVFIICWLPFFITHILNIHCDCNIPPVLYSAFTWLGYVNSAVNPIIYTTFNIEFRKAFLKILHC.

Topologically, residues 1-37 (MDPLNLSWYDDDPESRNWSRPFNGSEGKADRPPYNYY) are extracellular. N-linked (GlcNAc...) asparagine glycosylation is found at Asn5, Asn17, and Asn23. The chain crosses the membrane as a helical span at residues 38-60 (AMLLTLLIFVIVFGNVLVCMAVS). Topologically, residues 61–70 (REKALQTTTN) are cytoplasmic. Residues 71-93 (YLIVSLAVADLLVATLVMPWVVY) form a helical membrane-spanning segment. Residues 94–108 (LEVVGEWKFSRIHCD) are Extracellular-facing. Cysteines 107 and 182 form a disulfide. Residues 109–130 (IFVTLDVMMCTASILNLCAISI) form a helical membrane-spanning segment. At 131–151 (DRYTAVAMPMLYNTRYSSKRR) the chain is on the cytoplasmic side. A helical membrane pass occupies residues 152–172 (VTVMIAIVWVLSFTISCPMLF). Over 173 to 188 (GLNNTDQNECIIANPA) the chain is Extracellular. A helical transmembrane segment spans residues 189–213 (FVVYSSIVSFYVPFIVTLLVYIKIY). Residues 211–374 (KIYIVLRRRR…SQQKEKKATQ (164 aa)) form an interaction with PPP1R9B region. Residues 214 to 374 (IVLRRRRKRV…SQQKEKKATQ (161 aa)) are Cytoplasmic-facing. The tract at residues 281-332 (MEMLSSTSPPERTRYSPIPPSHHQLTLPDPSHHGLHSTPDSPAKPEKNGHAK) is disordered. Residues 375 to 396 (MLAIVLGVFIICWLPFFITHIL) form a helical membrane-spanning segment. The Extracellular segment spans residues 397-410 (NIHCDCNIPPVLYS). A disulfide bond links Cys400 and Cys402. Residues 411 to 432 (AFTWLGYVNSAVNPIIYTTFNI) traverse the membrane as a helical segment. Residues 433–444 (EFRKAFLKILHC) are Cytoplasmic-facing. Residue Cys444 is the site of S-palmitoyl cysteine attachment.

Belongs to the G-protein coupled receptor 1 family. Forms homo- and heterooligomers with DRD4. The interaction with DRD4 may modulate agonist-induced downstream signaling. Interacts with CADPS and CADPS2. Interacts with GPRASP1, PPP1R9B and CLIC6. Interacts with ARRB2. Interacts with HTR2A. Interacts with DRD1. Interacts with KCNA2. In terms of processing, palmitoylated. Palmitoylation which is required for proper localization to the plasma membrane and stability of the receptor could be carried on by ZDHHC4, ZDHHC3 and ZDHHC8.

The protein resides in the cell membrane. Its subcellular location is the golgi apparatus membrane. Functionally, dopamine receptor whose activity is mediated by G proteins which inhibit adenylyl cyclase. Positively regulates postnatal regression of retinal hyaloid vessels via suppression of VEGFR2/KDR activity, downstream of OPN5. In Bos taurus (Bovine), this protein is D(2) dopamine receptor (DRD2).